Here is a 205-residue protein sequence, read N- to C-terminus: High frequency lysogenization protein HflD homolog (205 aa).

This sequence belongs to the HflD family.

Its subcellular location is the cytoplasm. The protein localises to the cell inner membrane. The protein is High frequency lysogenization protein HflD homolog of Aliivibrio fischeri (strain ATCC 700601 / ES114) (Vibrio fischeri).